The following is a 280-amino-acid chain: Putative pyruvate, phosphate dikinase regulatory protein (280 aa).

Residue 152 to 159 (GVSRTSKS) participates in ADP binding.

The protein belongs to the pyruvate, phosphate/water dikinase regulatory protein family. PDRP subfamily.

It carries out the reaction N(tele)-phospho-L-histidyl/L-threonyl-[pyruvate, phosphate dikinase] + ADP = N(tele)-phospho-L-histidyl/O-phospho-L-threonyl-[pyruvate, phosphate dikinase] + AMP + H(+). It catalyses the reaction N(tele)-phospho-L-histidyl/O-phospho-L-threonyl-[pyruvate, phosphate dikinase] + phosphate + H(+) = N(tele)-phospho-L-histidyl/L-threonyl-[pyruvate, phosphate dikinase] + diphosphate. In terms of biological role, bifunctional serine/threonine kinase and phosphorylase involved in the regulation of the pyruvate, phosphate dikinase (PPDK) by catalyzing its phosphorylation/dephosphorylation. The sequence is that of Putative pyruvate, phosphate dikinase regulatory protein from Anaplasma phagocytophilum (strain HZ).